Here is a 197-residue protein sequence, read N- to C-terminus: Phosphoheptose isomerase (197 aa).

The SIS domain occupies 36–197 (MVNALLNEGK…IDSQLFGSEE (162 aa)). 51 to 53 (NGG) is a substrate binding site. The Zn(2+) site is built by His-60 and Glu-64. Substrate contacts are provided by residues Glu-64, 93–94 (ND), 119–121 (STS), Ser-124, and Gln-174. Residues Gln-174 and His-182 each contribute to the Zn(2+) site.

The protein belongs to the SIS family. GmhA subfamily. As to quaternary structure, homotetramer. Zn(2+) serves as cofactor.

The protein resides in the cytoplasm. The catalysed reaction is 2 D-sedoheptulose 7-phosphate = D-glycero-alpha-D-manno-heptose 7-phosphate + D-glycero-beta-D-manno-heptose 7-phosphate. The protein operates within carbohydrate biosynthesis; D-glycero-D-manno-heptose 7-phosphate biosynthesis; D-glycero-alpha-D-manno-heptose 7-phosphate and D-glycero-beta-D-manno-heptose 7-phosphate from sedoheptulose 7-phosphate: step 1/1. Catalyzes the isomerization of sedoheptulose 7-phosphate in D-glycero-D-manno-heptose 7-phosphate. The polypeptide is Phosphoheptose isomerase (Pseudomonas fluorescens (strain Pf0-1)).